The sequence spans 290 residues: Shikimate dehydrogenase (NADP(+)) (290 aa).

Shikimate is bound by residues 22-24 (SLS) and Thr68. Lys72 (proton acceptor) is an active-site residue. Residue Asp84 participates in NADP(+) binding. Positions 93 and 108 each coordinate shikimate. NADP(+)-binding positions include 133–137 (GSGGS) and Ile228. A shikimate-binding site is contributed by Tyr230. NADP(+) is bound at residue Gly251.

Belongs to the shikimate dehydrogenase family. Homodimer.

The enzyme catalyses shikimate + NADP(+) = 3-dehydroshikimate + NADPH + H(+). It functions in the pathway metabolic intermediate biosynthesis; chorismate biosynthesis; chorismate from D-erythrose 4-phosphate and phosphoenolpyruvate: step 4/7. Its function is as follows. Involved in the biosynthesis of the chorismate, which leads to the biosynthesis of aromatic amino acids. Catalyzes the reversible NADPH linked reduction of 3-dehydroshikimate (DHSA) to yield shikimate (SA). This Leptospira interrogans serogroup Icterohaemorrhagiae serovar Lai (strain 56601) protein is Shikimate dehydrogenase (NADP(+)).